Reading from the N-terminus, the 306-residue chain is tRNA pseudouridine synthase B (306 aa).

Residue Asp48 is the Nucleophile of the active site.

It belongs to the pseudouridine synthase TruB family. Type 1 subfamily.

The enzyme catalyses uridine(55) in tRNA = pseudouridine(55) in tRNA. Functionally, responsible for synthesis of pseudouridine from uracil-55 in the psi GC loop of transfer RNAs. The polypeptide is tRNA pseudouridine synthase B (Haemophilus influenzae (strain 86-028NP)).